We begin with the raw amino-acid sequence, 1167 residues long: Integrin alpha-10 (1167 aa).

The first 22 residues, 1–22 (MELPFVTHLFLPLVFLTGLCSP), serve as a signal peptide directing secretion. Over 23–1122 (FNLDEHHPRL…VVQTRPILIS (1100 aa)) the chain is Extracellular. FG-GAP repeat units lie at residues 24 to 85 (NLDE…HNAP) and 95 to 154 (QLGN…PQGS). A disulfide bridge links Cys-76 with Cys-86. 4 N-linked (GlcNAc...) asparagine glycosylation sites follow: Asn-98, Asn-234, Asn-336, and Asn-364. The region spanning 167-350 (DVVIVLDGSN…AALTDIVDAL (184 aa)) is the VWFA domain. FG-GAP repeat units lie at residues 361-412 (HAEN…LFPP), 417-470 (EDEF…KDGA), 472-534 (RVAQ…SLLT), 535-593 (LQGT…GVRP), and 597-657 (QRIA…VTPQ). The Ca(2+) site is built by Asp-494, Asp-496, Asp-498, Asp-502, Asp-558, Asn-560, Asp-562, Asp-566, Asp-620, Asp-622, Asp-624, and Asp-628. Cystine bridges form between Cys-666-Cys-675 and Cys-681-Cys-736. N-linked (GlcNAc...) asparagine glycosylation is found at Asn-733 and Asn-763. Cys-789 and Cys-795 are disulfide-bonded. Asn-839, Asn-921, Asn-1011, Asn-1018, and Asn-1039 each carry an N-linked (GlcNAc...) asparagine glycan. A helical transmembrane segment spans residues 1123–1145 (LWILIGSVLGGLLLLALLVFCLW). Topologically, residues 1146–1167 (KLGFFAHKKIPEEEKREEKLEQ) are cytoplasmic.

Belongs to the integrin alpha chain family. As to quaternary structure, heterodimer of an alpha and a beta subunit. Alpha-10 associates with beta-1. In terms of tissue distribution, widely expressed with highest expression in muscle and heart. Found in articular cartilage.

The protein localises to the membrane. In terms of biological role, integrin alpha-10/beta-1 is a receptor for collagen. This Homo sapiens (Human) protein is Integrin alpha-10 (ITGA10).